A 673-amino-acid polypeptide reads, in one-letter code: Forkhead box protein O3 (673 aa).

Residues 1 to 153 (MAEAPASPAP…SGQPRKCSSR (153 aa)) are disordered. S30 bears the Phosphoserine; by AMPK mark. T32 carries the post-translational modification Phosphothreonine; by PKB/AKT1. Residue K46 is modified to N6-methyllysine. Residues 57 to 68 (IPEEEDDEDDED) are compositionally biased toward acidic residues. The segment covering 79-89 (IGGGGGSGTLG) has biased composition (gly residues). A required for mitochondrial import region spans residues 80 to 108 (GGGGGSGTLGSGLLLEDSARVLAPGGQDP). The residue at position 149 (K149) is an N6-methyllysine. The segment at residues 157 to 251 (WGNLSYADLI…KSGKAPRRRA (95 aa)) is a DNA-binding region (fork-head). T179 carries the phosphothreonine; by AMPK modification. At S209 the chain carries Phosphoserine; by STK4/MST1. S215 bears the Phosphoserine; by MAPKAPK5 mark. K230 is modified (N6-methyllysine). Residues 231–302 (SSWWIINPDG…GSPTSRSSDE (72 aa)) form a disordered region. K242 is modified (N6-acetyllysine). The Nuclear localization signal signature appears at 242 to 259 (KSGKAPRRRAVSMDNSNK). S253 is subject to Phosphoserine; by PKB/AKT1 and MAPKAPK5. Over residues 261-272 (TKSRGRAAKKKA) the composition is skewed to basic residues. An N6-methyllysine mark is found at K262 and K271. Phosphoserine is present on residues S280 and S284. The span at 283-298 (DSPSQLSKWPGSPTSR) shows a compositional bias: polar residues. K290 carries the post-translational modification N6-methyllysine. The residue at position 294 (S294) is a Phosphoserine. S299 carries the phosphoserine; by CaMK2A modification. The interval 300-673 (SDELDAWTDF…QASSQSWVPG (374 aa)) is mediates interaction with CHUK/IKKA and IKBKB/IKKB. S311 is subject to Phosphoserine. The residue at position 315 (S315) is a Phosphoserine; by SGK1. Phosphoserine; by AMPK occurs at positions 399 and 413. K419 is modified (N6-methyllysine). Position 421 is a phosphoserine (S421). Positions 536–587 (HQHQTQGALGGSRALSNSVSNMGLSESSSLGSAKHQQQSPVSQSMQTLSDSL) are disordered. Polar residues predominate over residues 549 to 582 (ALSNSVSNMGLSESSSLGSAKHQQQSPVSQSMQT). Phosphoserine; by MAPKAPK5 is present on S551. S555 is subject to Phosphoserine; by AMPK and MAPKAPK5. S588 and S626 each carry phosphoserine; by AMPK. A Phosphoserine; by IKKB modification is found at S644.

Upon metabolic stress, forms a complex composed of FOXO3, SIRT3 and mitochondrial RNA polymerase POLRMT; the complex is recruited to mtDNA in a SIRT3-dependent manner. Also forms a complex composed of FOXO3, SIRT3, TFAM and POLRMT. Interacts with SIRT2; the interaction occurs independently of SIRT2 deacetylase activity. Interacts with YWHAB/14-3-3-beta and YWHAZ/14-3-3-zeta, which are required for cytosolic sequestration. Upon oxidative stress, interacts with STK4/MST1, which disrupts interaction with YWHAB/14-3-3-beta and leads to nuclear translocation. Interacts with PIM1. Interacts with DDIT3/CHOP. Interacts (deacetylated form) with SKP2. Interacts with CHUK and IKBKB. Interacts with CAMK2A, CAMK2B and calcineurin A. Interacts with NUPR1; this interaction represses FOXO3 transactivation. In terms of processing, in the presence of survival factors such as IGF1, phosphorylated on Thr-32 and Ser-253 by AKT1/PKB. This phosphorylated form then interacts with 14-3-3 proteins and is retained in the cytoplasm. Survival factor withdrawal induces dephosphorylation and promotes translocation to the nucleus where the dephosphorylated protein induces transcription of target genes and triggers apoptosis. Although AKT1/PKB doesn't appear to phosphorylate Ser-315 directly, it may activate other kinases that trigger phosphorylation at this residue. Phosphorylated by STK4/MST1 on Ser-209 upon oxidative stress, which leads to dissociation from YWHAB/14-3-3-beta and nuclear translocation. Phosphorylated by PIM1. Phosphorylation by AMPK leads to the activation of transcriptional activity without affecting subcellular localization. In response to metabolic stress, phosphorylated by AMPK on Ser-30 which mediates FOXO3 mitochondrial translocation. Phosphorylation by MAPKAPK5 promotes nuclear localization and DNA-binding, leading to induction of miR-34b and miR-34c expression, 2 post-transcriptional regulators of MYC that bind to the 3'UTR of MYC transcript and prevent its translation. Phosphorylated by CHUK/IKKA and IKBKB/IKKB. TNF-induced inactivation of FOXO3 requires its phosphorylation at Ser-644 by IKBKB/IKKB which promotes FOXO3 retention in the cytoplasm, polyubiquitination and ubiquitin-mediated proteasomal degradation. May be dephosphorylated by calcineurin A on Ser-299 which abolishes FOXO3 transcriptional activity. In cancer cells, ERK mediated-phosphorylation of Ser-12 is required for mitochondrial translocation of FOXO3 in response to metabolic stress or chemotherapeutic agents. Phosphorylation at Ser-253 promotes its degradation by the proteasome. Dephosphorylation at Ser-253 by protein phosphatase 2A (PPP2CA) promotes its stabilization; interaction with PPP2CA is enhanced by AMBRA1. Deacetylation by SIRT1 or SIRT2 stimulates interaction of FOXO3 with SKP2 and facilitates SCF(SKP2)-mediated FOXO3 ubiquitination and proteasomal degradation. Deacetylation by SIRT2 stimulates FOXO3-mediated transcriptional activity in response to oxidative stress. Deacetylated by SIRT3. Deacetylation by SIRT3 stimulates FOXO3-mediated mtDNA transcriptional activity in response to metabolic stress. Post-translationally, heavily methylated by SET9 which decreases stability, while moderately increasing transcriptional activity. The main methylation site is Lys-271. Methylation doesn't affect subcellular location. In terms of processing, polyubiquitinated. Ubiquitinated by a SCF complex containing SKP2, leading to proteasomal degradation. The N-terminus is cleaved following import into the mitochondrion. As to expression, ubiquitous.

It localises to the cytoplasm. Its subcellular location is the cytosol. The protein localises to the nucleus. It is found in the mitochondrion matrix. The protein resides in the mitochondrion outer membrane. Functionally, transcriptional activator that recognizes and binds to the DNA sequence 5'-[AG]TAAA[TC]A-3' and regulates different processes, such as apoptosis and autophagy. Acts as a positive regulator of autophagy in skeletal muscle: in starved cells, enters the nucleus following dephosphorylation and binds the promoters of autophagy genes, such as GABARAP1L, MAP1LC3B and ATG12, thereby activating their expression, resulting in proteolysis of skeletal muscle proteins. Triggers apoptosis in the absence of survival factors, including neuronal cell death upon oxidative stress. Participates in post-transcriptional regulation of MYC: following phosphorylation by MAPKAPK5, promotes induction of miR-34b and miR-34c expression, 2 post-transcriptional regulators of MYC that bind to the 3'UTR of MYC transcript and prevent its translation. In response to metabolic stress, translocates into the mitochondria where it promotes mtDNA transcription. In response to metabolic stress, translocates into the mitochondria where it promotes mtDNA transcription. Also acts as a key regulator of chondrogenic commitment of skeletal progenitor cells in response to lipid availability: when lipids levels are low, translocates to the nucleus and promotes expression of SOX9, which induces chondrogenic commitment and suppresses fatty acid oxidation. Also acts as a key regulator of regulatory T-cells (Treg) differentiation by activating expression of FOXP3. In Homo sapiens (Human), this protein is Forkhead box protein O3.